We begin with the raw amino-acid sequence, 590 residues long: Aspartate--tRNA(Asp/Asn) ligase (590 aa).

Glu175 lines the L-aspartate pocket. The tract at residues 199–202 is aspartate; sequence QQYK. L-aspartate contacts are provided by Arg221 and His450. Residue 221-223 participates in ATP binding; that stretch reads RDE. Glu484 serves as a coordination point for ATP. Arg491 serves as a coordination point for L-aspartate. 536–539 provides a ligand contact to ATP; that stretch reads GVDR.

It belongs to the class-II aminoacyl-tRNA synthetase family. Type 1 subfamily. In terms of assembly, homodimer.

It is found in the cytoplasm. It catalyses the reaction tRNA(Asx) + L-aspartate + ATP = L-aspartyl-tRNA(Asx) + AMP + diphosphate. In terms of biological role, aspartyl-tRNA synthetase with relaxed tRNA specificity since it is able to aspartylate not only its cognate tRNA(Asp) but also tRNA(Asn). Reaction proceeds in two steps: L-aspartate is first activated by ATP to form Asp-AMP and then transferred to the acceptor end of tRNA(Asp/Asn). The chain is Aspartate--tRNA(Asp/Asn) ligase from Rhodopseudomonas palustris (strain BisB5).